The following is a 299-amino-acid chain: Plant-type L-asparaginase (299 aa).

Threonine 169 serves as the catalytic Nucleophile. Residues 197–200 (RVGD) and 220–223 (TGVG) contribute to the substrate site.

The protein belongs to the Ntn-hydrolase family. As to quaternary structure, heterotetramer of two alpha and two beta chains arranged as a dimer of alpha/beta heterodimers. The uncleaved protein forms homodimers. In terms of processing, autocleaved. Generates the alpha and beta subunits. The N-terminal residue of the beta subunit is thought to be responsible for the nucleophile hydrolase activity.

It catalyses the reaction L-asparagine + H2O = L-aspartate + NH4(+). Its activity is regulated as follows. Divalent metal ions and EDTA do not have significant effect on enzyme activity, indicating that activity is metal-independent. Functionally, catalyzes the hydrolysis of L-asparagine into L-aspartate and ammonia. Also displays D-asparaginase activity, which is about 20% of the L-asparaginase activity. Does not exhibit glutaminase activity. This Pyrobaculum calidifontis (strain DSM 21063 / JCM 11548 / VA1) protein is Plant-type L-asparaginase.